Here is a 42-residue protein sequence, read N- to C-terminus: uncharacterized protein (42 aa).

The chain crosses the membrane as a helical span at residues 15–37 (PLILAVDCAIIIPNTNFIHSFLI).

It localises to the membrane. This is an uncharacterized protein from Dictyostelium discoideum (Social amoeba).